We begin with the raw amino-acid sequence, 159 residues long: Cyclic pyranopterin monophosphate synthase (159 aa).

Residues 75-77 (MCH) and 113-114 (ME) contribute to the substrate site. The active site involves Asp-128.

This sequence belongs to the MoaC family. Homohexamer; trimer of dimers.

It carries out the reaction (8S)-3',8-cyclo-7,8-dihydroguanosine 5'-triphosphate = cyclic pyranopterin phosphate + diphosphate. The protein operates within cofactor biosynthesis; molybdopterin biosynthesis. Functionally, catalyzes the conversion of (8S)-3',8-cyclo-7,8-dihydroguanosine 5'-triphosphate to cyclic pyranopterin monophosphate (cPMP). This is Cyclic pyranopterin monophosphate synthase from Desulfatibacillum aliphaticivorans.